A 356-amino-acid polypeptide reads, in one-letter code: Peptide methionine sulfoxide reductase MsrA/MsrB (356 aa).

Positions 46–199 (HEIYLAGGCF…PNGYCHIDLE (154 aa)) are peptide methionine sulfoxide reductase A. Cysteine 54 is an active-site residue. The MsrB domain occupies 216 to 339 (DAELKAKLTP…NSAAVKFIPL (124 aa)). The Nucleophile role is filled by cysteine 328.

In the N-terminal section; belongs to the MsrA Met sulfoxide reductase family. The protein in the C-terminal section; belongs to the MsrB Met sulfoxide reductase family.

It carries out the reaction L-methionyl-[protein] + [thioredoxin]-disulfide + H2O = L-methionyl-(S)-S-oxide-[protein] + [thioredoxin]-dithiol. The catalysed reaction is [thioredoxin]-disulfide + L-methionine + H2O = L-methionine (S)-S-oxide + [thioredoxin]-dithiol. It catalyses the reaction L-methionyl-[protein] + [thioredoxin]-disulfide + H2O = L-methionyl-(R)-S-oxide-[protein] + [thioredoxin]-dithiol. In terms of biological role, has an important function as a repair enzyme for proteins that have been inactivated by oxidation. Catalyzes the reversible oxidation-reduction of methionine sulfoxide in proteins to methionine. This Aggregatibacter actinomycetemcomitans (Actinobacillus actinomycetemcomitans) protein is Peptide methionine sulfoxide reductase MsrA/MsrB (msrAB).